Here is a 390-residue protein sequence, read N- to C-terminus: Cell division protein FtsZ (390 aa).

GTP contacts are provided by residues 21–25, 108–110, Glu-139, Arg-143, and Asp-187; these read GGGNN and GTG. Residues 315-390 are disordered; that stretch reads FDDKPTSHGR…EERRSRRTRR (76 aa). A compositionally biased stretch (polar residues) spans 326–360; it reads SGSTGFGTSVNTSSNATSKDESFTSNSSNAQATDS. Basic and acidic residues predominate over residues 361–384; that stretch reads VSERTHTTKEDDIPSFIRNREERR.

Belongs to the FtsZ family. In terms of assembly, homodimer. Polymerizes to form a dynamic ring structure in a strictly GTP-dependent manner. Interacts directly with several other division proteins.

Its subcellular location is the cytoplasm. Essential cell division protein that forms a contractile ring structure (Z ring) at the future cell division site. The regulation of the ring assembly controls the timing and the location of cell division. One of the functions of the FtsZ ring is to recruit other cell division proteins to the septum to produce a new cell wall between the dividing cells. Binds GTP and shows GTPase activity. In Staphylococcus aureus (strain NCTC 8325 / PS 47), this protein is Cell division protein FtsZ.